The primary structure comprises 347 residues: Putative ORC1-type DNA replication protein 1 (347 aa).

ATP-binding positions include 34 to 38 (TGKTV), Tyr-167, and Arg-179.

It belongs to the CDC6/cdc18 family.

Its function is as follows. Involved in regulation of DNA replication. Has no effect on MCM helicase activity, either stimulatory or inhibitory. Does not bind DNA. The polypeptide is Putative ORC1-type DNA replication protein 1 (cdc6-1) (Thermoplasma acidophilum (strain ATCC 25905 / DSM 1728 / JCM 9062 / NBRC 15155 / AMRC-C165)).